Consider the following 216-residue polypeptide: uncharacterized protein (216 aa).

A helical membrane pass occupies residues Leu-5–Leu-22.

It localises to the membrane. This is an uncharacterized protein from Aquifex aeolicus (strain VF5).